A 71-amino-acid chain; its full sequence is ATP synthase subunit c (71 aa).

2 helical membrane passes run Val-5–Ala-25 and Phe-46–Phe-66.

It belongs to the ATPase C chain family. F-type ATPases have 2 components, F(1) - the catalytic core - and F(0) - the membrane proton channel. F(1) has five subunits: alpha(3), beta(3), gamma(1), delta(1), epsilon(1). F(0) has three main subunits: a(1), b(2) and c(10-14). The alpha and beta chains form an alternating ring which encloses part of the gamma chain. F(1) is attached to F(0) by a central stalk formed by the gamma and epsilon chains, while a peripheral stalk is formed by the delta and b chains.

The protein localises to the cell membrane. Functionally, f(1)F(0) ATP synthase produces ATP from ADP in the presence of a proton or sodium gradient. F-type ATPases consist of two structural domains, F(1) containing the extramembraneous catalytic core and F(0) containing the membrane proton channel, linked together by a central stalk and a peripheral stalk. During catalysis, ATP synthesis in the catalytic domain of F(1) is coupled via a rotary mechanism of the central stalk subunits to proton translocation. In terms of biological role, key component of the F(0) channel; it plays a direct role in translocation across the membrane. A homomeric c-ring of between 10-14 subunits forms the central stalk rotor element with the F(1) delta and epsilon subunits. This Clostridium beijerinckii (strain ATCC 51743 / NCIMB 8052) (Clostridium acetobutylicum) protein is ATP synthase subunit c.